The chain runs to 202 residues: Phospholipase A2 inhibitor gamma subunit A (202 aa).

A signal peptide spans 1-19 (MKSLQIICLLFIFVARGSC). 8 disulfide bridges follow: Cys22-Cys47, Cys25-Cys32, Cys40-Cys68, Cys74-Cys95, Cys96-Cys101, Cys119-Cys144, Cys137-Cys166, and Cys170-Cys192.

It belongs to the CNF-like-inhibitor family. As to quaternary structure, heteromer composed of subunit A and subunit B. In terms of tissue distribution, expressed by the liver.

The protein resides in the secreted. In terms of biological role, inhibits the enzymatic activity of the phospholipase A2 (PLA2). The protein is Phospholipase A2 inhibitor gamma subunit A of Elaphe climacophora (Japanese rat snake).